The chain runs to 206 residues: Dephospho-CoA kinase (206 aa).

One can recognise a DPCK domain in the interval 6–206; that stretch reads IIGLTGGIAS…KWKWKDWSKK (201 aa). 14 to 19 lines the ATP pocket; it reads ASGKST.

The protein belongs to the CoaE family.

It localises to the cytoplasm. It catalyses the reaction 3'-dephospho-CoA + ATP = ADP + CoA + H(+). It functions in the pathway cofactor biosynthesis; coenzyme A biosynthesis; CoA from (R)-pantothenate: step 5/5. Catalyzes the phosphorylation of the 3'-hydroxyl group of dephosphocoenzyme A to form coenzyme A. The sequence is that of Dephospho-CoA kinase from Carboxydothermus hydrogenoformans (strain ATCC BAA-161 / DSM 6008 / Z-2901).